Here is a 249-residue protein sequence, read N- to C-terminus: Small ribosomal subunit protein eS6 (249 aa).

Over residues 216–229 (RMKEAKEKRQEQIA) the composition is skewed to basic and acidic residues. Positions 216-249 (RMKEAKEKRQEQIAKRRRLSSLRASTSKSESSQK) are disordered. S235, S236, S240, S244, and S247 each carry phosphoserine. Residues 236–249 (SLRASTSKSESSQK) are compositionally biased toward low complexity.

The protein belongs to the eukaryotic ribosomal protein eS6 family. As to quaternary structure, component of the small ribosomal subunit. Post-translationally, ribosomal protein S6 is the major substrate of protein kinases in eukaryote ribosomes. The phosphorylation is stimulated by growth factors, tumor promoting agents, and mitogens. It is dephosphorylated at growth arrest.

The protein localises to the cytoplasm. Component of the 40S small ribosomal subunit. Plays an important role in controlling cell growth and proliferation through the selective translation of particular classes of mRNA. In Oncorhynchus mykiss (Rainbow trout), this protein is Small ribosomal subunit protein eS6 (rps6).